The sequence spans 121 residues: Small ribosomal subunit protein uS13 (121 aa).

The interval His91 to Lys121 is disordered.

The protein belongs to the universal ribosomal protein uS13 family. In terms of assembly, part of the 30S ribosomal subunit. Forms a loose heterodimer with protein S19. Forms two bridges to the 50S subunit in the 70S ribosome.

Functionally, located at the top of the head of the 30S subunit, it contacts several helices of the 16S rRNA. In the 70S ribosome it contacts the 23S rRNA (bridge B1a) and protein L5 of the 50S subunit (bridge B1b), connecting the 2 subunits; these bridges are implicated in subunit movement. Contacts the tRNAs in the A and P-sites. In Staphylococcus carnosus (strain TM300), this protein is Small ribosomal subunit protein uS13.